An 833-amino-acid chain; its full sequence is Enhancer of filamentation 1 (833 aa).

The SH3 domain maps to 3–65 (ARNLMARALY…PGNRVKLLIG (63 aa)). 7 positions are modified to phosphotyrosine: Y91, Y163, Y165, Y176, Y188, Y213, and Y222. A disordered region spans residues 237 to 258 (EKEYDFPPPMKQDGKPDTRPEG). A compositionally biased stretch (basic and acidic residues) spans 248 to 258 (QDGKPDTRPEG). S295 carries the post-translational modification Phosphoserine. Disordered regions lie at residues 297–316 (SLHH…SDAY), 326–403 (EVPT…RLRL), and 560–623 (PANS…SERS). Residues 304–314 (QLGQSGDTQSD) show a composition bias toward polar residues. Y316 carries the post-translational modification Phosphotyrosine. A compositionally biased stretch (basic and acidic residues) spans 331–343 (TSEKANPEERDGV). An interacts with CTTN region spans residues 350–833 (NPADAKGSRD…KRSLLEMATF (484 aa)). Residues 359–362 (DVVD) carry the Caspase cleavage related site motif. The residue at position 368 (S368) is a Phosphoserine. Residues 368-396 (SFSSTGSTRSNMSTSSTSSKESSLSASPS) show a composition bias toward low complexity. A compositionally biased stretch (polar residues) spans 564–586 (HLKNGPNSIMNSSEYTHPGSQMQ). The tract at residues 709–759 (FYYDQCETHFISLLNAIDALFSCVSSAQPPRIFVAHSKFVILSAHKLVFIG) is divergent helix-loop-helix motif. The segment at 709–833 (FYYDQCETHF…KRSLLEMATF (125 aa)) is required for interaction with PLK1. S779 is modified (phosphoserine). T803 carries the post-translational modification Phosphothreonine.

It belongs to the CAS family. Homodimer. Forms heterodimers with BCAR1/p130cas. Forms complexes with PTK2B/RAFTK, adapter protein CRKL and LYN kinase. Part of a complex composed of NEDD9, AURKA and CTTN; within the complex NEDD9 acts as a scaffold protein and is required for complex formation. Part of a ternary complex composed of SMAD3, ITCH/AIP4 and NEDD9/HEF1; within the complex NEDD9/HEF1 interacts (via N-terminus) with ITCH/AIP4 (via WW domains); the complex mediates ubiquitination and proteasomal degradation of NEDD9/HEF1. Interacts with SMAD3; the interaction promotes NEDD9 ubiquitination and proteasomal degradation. Interacts with ID2. Interacts with CTTN (via N-terminus). Interacts with MICAL. Interacts with TXNL4/DIM1. Interacts with BCAR3 (via Ras-GEF domain). Interacts with SH2D3C isoform 1 and isoform 2. Interacts with ECT2. Interacts with PTPN11/SHP-2 (via SH2 domains); the interaction is enhanced when NEDD9/CAS-L is tyrosine phosphorylated. Interacts (via C-terminus) with PLK1 (via polo box domains). Interacts with NKX2-5. Interacts with SMAD3; the interaction is inhibited by oxidation of NEDD9. Interacts with NEDD9/HEF1; interaction is induced by CXCL12 promotion of ABL-mediated phosphorylation of NEDD9/HEF1. Interacts (via SH3 domain) with PTK2/FAK. Interacts with FYN; in the presence of PTK2. Interacts with INPPL1/SHIP2. In terms of processing, polyubiquitinated by ITCH/AIP4, leading to proteasomal degradation. PTK2/FAK1 phosphorylates the protein at the YDYVHL motif (conserved among all cas proteins) following integrin stimulation. The SRC family kinases (FYN, SRC, LCK and CRK) are recruited to the phosphorylated sites and can phosphorylate other tyrosine residues. Ligation of either integrin beta-1 or B-cell antigen receptor on tonsillar B-cells and B-cell lines promotes tyrosine phosphorylation and both integrin and BCR-mediated tyrosine phosphorylation requires an intact actin network. Phosphorylation is required to recruit NEDD9 to T-cell receptor microclusters at the periphery of newly formed immunological synapses. In fibroblasts transformation with oncogene v-ABL results in an increase in tyrosine phosphorylation. Transiently phosphorylated following CD3 cross-linking and this phosphorylated form binds to CRKL and C3G. A mutant lacking the SH3 domain is phosphorylated upon CD3 cross-linking but not upon integrin beta-1 cross-linking. Tyrosine phosphorylation occurs upon stimulation of the G-protein coupled C1a calcitonin receptor. Calcitonin-stimulated tyrosine phosphorylation is mediated by calcium- and protein kinase C-dependent mechanisms and requires the integrity of the actin cytoskeleton. Phosphorylation at Ser-368 induces proteasomal degradation. Phosphorylated by LYN. Phosphorylation at Ser-779 by CSNK1D or CSNK1E, or phosphorylation of Thr-803 by CSNK1E enhances the interaction of NEDD9 with PLK1. In terms of tissue distribution, expressed in splenic lymphocytes (at protein level). Expressed in T-cells (at protein level). Expressed in the thymus. Expressed throughout the brain however particularly abundant in the cortex and hippocampus.

It is found in the cytoplasm. The protein resides in the cell cortex. Its subcellular location is the nucleus. It localises to the golgi apparatus. The protein localises to the cell projection. It is found in the lamellipodium. The protein resides in the cell junction. Its subcellular location is the focal adhesion. It localises to the cytoskeleton. The protein localises to the spindle pole. It is found in the cilium. The protein resides in the cilium basal body. Its subcellular location is the basolateral cell membrane. Its function is as follows. Scaffolding protein which plays a central coordinating role for tyrosine-kinase-based signaling related to cell adhesion. As a focal adhesion protein, plays a role in embryonic fibroblast migration. May play an important role in integrin beta-1 or B cell antigen receptor (BCR) mediated signaling in B- and T-cells. Integrin beta-1 stimulation leads to recruitment of various proteins including CRKl and SHPTP2 to the tyrosine phosphorylated form. Promotes adhesion and migration of lymphocytes; as a result required for the correct migration of lymphocytes to the spleen and other secondary lymphoid organs. Plays a role in the organization of T-cell F-actin cortical cytoskeleton and the centralization of T-cell receptor microclusters at the immunological synapse. Negatively regulates cilia outgrowth in polarized cysts. Modulates cilia disassembly via activation of AURKA-mediated phosphorylation of HDAC6 and subsequent deacetylation of alpha-tubulin. Positively regulates RANKL-induced osteoclastogenesis. Required for the maintenance of hippocampal dendritic spines in the dentate gyrus and CA1 regions, thereby involved in spatial learning and memory. The polypeptide is Enhancer of filamentation 1 (Mus musculus (Mouse)).